Reading from the N-terminus, the 750-residue chain is Photosystem I P700 chlorophyll a apoprotein A1 (750 aa).

8 consecutive transmembrane segments (helical) span residues 70–93, 156–179, 195–219, 291–309, 346–369, 385–411, 433–455, and 531–549; these read VFSA…FHGA, LYCT…FHYH, LNHH…HVSL, IAHH…GHMY, WHAQ…HHMY, LSLF…IFMV, AIIS…LYIH, and FLVH…LILL. Residues Cys-573 and Cys-582 each contribute to the [4Fe-4S] cluster site. The next 2 helical transmembrane spans lie at 589–610 and 664–686; these read HVFL…HFSW and LSAY…MFLF. His-675 contributes to the chlorophyll a' binding site. Chlorophyll a is bound by residues Met-683 and Tyr-691. Residue Trp-692 coordinates phylloquinone. A helical transmembrane segment spans residues 724 to 744; that stretch reads AVGVTHYLLGGIATTWAFFLA.

Belongs to the PsaA/PsaB family. The PsaA/B heterodimer binds the P700 chlorophyll special pair and subsequent electron acceptors. PSI consists of a core antenna complex that captures photons, and an electron transfer chain that converts photonic excitation into a charge separation. The eukaryotic PSI reaction center is composed of at least 11 subunits. Requires P700 is a chlorophyll a/chlorophyll a' dimer, A0 is one or more chlorophyll a, A1 is one or both phylloquinones and FX is a shared 4Fe-4S iron-sulfur center. as cofactor.

Its subcellular location is the plastid. It is found in the chloroplast thylakoid membrane. It carries out the reaction reduced [plastocyanin] + hnu + oxidized [2Fe-2S]-[ferredoxin] = oxidized [plastocyanin] + reduced [2Fe-2S]-[ferredoxin]. PsaA and PsaB bind P700, the primary electron donor of photosystem I (PSI), as well as the electron acceptors A0, A1 and FX. PSI is a plastocyanin-ferredoxin oxidoreductase, converting photonic excitation into a charge separation, which transfers an electron from the donor P700 chlorophyll pair to the spectroscopically characterized acceptors A0, A1, FX, FA and FB in turn. Oxidized P700 is reduced on the lumenal side of the thylakoid membrane by plastocyanin. The sequence is that of Photosystem I P700 chlorophyll a apoprotein A1 from Eucalyptus globulus subsp. globulus (Tasmanian blue gum).